Here is a 314-residue protein sequence, read N- to C-terminus: 4-hydroxyproline 2-epimerase (314 aa).

The active-site Proton acceptor is the Cys-88. Substrate contacts are provided by residues 89 to 90 (GH), His-208, and Asp-232. Cys-236 functions as the Proton donor in the catalytic mechanism. Residue 237-238 (GT) participates in substrate binding.

It belongs to the proline racemase family. In terms of assembly, homodimer.

The enzyme catalyses trans-4-hydroxy-L-proline = cis-4-hydroxy-D-proline. Inhibited by iodoacetate, iodoacetamide and by high amounts (10 mM) of pyrrole-2-carboxylate (PYC). Not inhibited by PYC at 1 mM. Allows intracellular utilization of 4-hydroxyproline, one of the major constituents of host collagen, by converting trans-4-hydroxy-L-proline (t4LHyp) to cis-4-hydroxy-D-proline (c4DHyp), which can be further metabolized by intracellular 4-hydroxy-D-proline oxidases. Strong B-cell mitogen. Plays an important role in the regulation of intra- and extracellular amino acid pools, allowing the bacterium to profit from host precursors and enzymatic pathways. Cannot use L-proline, trans-3-hydroxy-L-proline (t3LHyp) and pyrrolidone-5-carboxylate (P5C) as substrate. The sequence is that of 4-hydroxyproline 2-epimerase from Pseudomonas aeruginosa (strain ATCC 15692 / DSM 22644 / CIP 104116 / JCM 14847 / LMG 12228 / 1C / PRS 101 / PAO1).